Reading from the N-terminus, the 107-residue chain is Alpha-elapitoxin-Al2a (107 aa).

Residues 1–21 form the signal peptide; that stretch reads MKTLLLTLVVVTIVCLDLGDS. Intrachain disulfides connect C24–C41, C34–C62, C47–C51, C66–C77, and C78–C83.

Belongs to the three-finger toxin family. Long-chain subfamily. Type II alpha-neurotoxin sub-subfamily. In terms of tissue distribution, expressed by the venom gland.

It is found in the secreted. Its function is as follows. Binds with high affinity to muscular (alpha-1/CHRNA1) and neuronal (alpha-7/CHRNA7) nicotinic acetylcholine receptor (nAChR) and inhibits acetylcholine from binding to the receptor, thereby impairing neuromuscular and neuronal transmission. This Austrelaps labialis (Pygmy copperhead) protein is Alpha-elapitoxin-Al2a.